The primary structure comprises 426 residues: Coiled-coil domain-containing protein 86 (426 aa).

Residues 1–426 (MDTPLRRSRR…QPPQRPVAKV (426 aa)) are disordered. Position 18 is a phosphoserine (Ser18). Over residues 33-49 (ALVDFKSNSEETGELKS) the composition is skewed to basic and acidic residues. Positions 55–145 (LSLPSPGPQP…SLPSPGPQPE (91 aa)) are enriched in pro residues. Ser59 bears the Phosphoserine mark. At Thr66 the chain carries Phosphothreonine. Phosphoserine occurs at positions 67, 70, 161, 172, 183, 191, 194, 225, 252, 253, and 283. Positions 241-255 (QPAQELTVQAPSSPE) are enriched in polar residues. A compositionally biased stretch (basic residues) spans 304–320 (GKPKSGRVWKDRSKKRF). A compositionally biased stretch (basic and acidic residues) spans 339–383 (ERQERKLAKDFARHLEEEKQRRRQEKKERRAENLRRRLENERKAE). Positions 346–389 (AKDFARHLEEEKQRRRQEKKERRAENLRRRLENERKAEIVQVIR) form a coiled coil. Positions 392 to 402 (AKLKKAKKKQL) are enriched in basic residues. Arg408 bears the Citrulline mark.

Post-translationally, citrullinated by PADI4. In terms of tissue distribution, highly expressed in testis. Also expressed in heart, liver, kidney.

Its subcellular location is the nucleus. The protein resides in the chromosome. It is found in the nucleolus. Its function is as follows. Required for proper chromosome segregation during mitosis and error-free mitotic progression. This chain is Coiled-coil domain-containing protein 86, found in Mus musculus (Mouse).